The chain runs to 213 residues: MDTTTFPYDTARLGELAQLLIDNVRELAQAGWTPATSSNFSHRLDDRHAAITVSGKDKGRLIEDDIMVVDFDGKAVGRPLRPSAETLLHTQLYRRFPEIGCVLHTHSPVQTIASRLYAPQGHVHLEGYELLKAFAGNSTHEMAIDVPVFANTQDMNVLSKQVDDLLDRQNLWGYLIDGHGLYAWGRDMAEARRHLEAFEFLFHCELELRRLHG.

Histidine 104 and histidine 106 together coordinate Zn(2+).

This sequence belongs to the aldolase class II family. MtnB subfamily. Zn(2+) serves as cofactor.

The catalysed reaction is 5-(methylsulfanyl)-D-ribulose 1-phosphate = 5-methylsulfanyl-2,3-dioxopentyl phosphate + H2O. The protein operates within amino-acid biosynthesis; L-methionine biosynthesis via salvage pathway; L-methionine from S-methyl-5-thio-alpha-D-ribose 1-phosphate: step 2/6. Functionally, catalyzes the dehydration of methylthioribulose-1-phosphate (MTRu-1-P) into 2,3-diketo-5-methylthiopentyl-1-phosphate (DK-MTP-1-P). This is Methylthioribulose-1-phosphate dehydratase from Stenotrophomonas maltophilia (strain K279a).